The chain runs to 168 residues: Small ribosomal subunit protein uS9 (168 aa).

A disordered region spans residues 1–38 (MAKIADSIDSAQADSVENVESYSTETPESAAPAAPRPV). Over residues 9–22 (DSAQADSVENVESY) the composition is skewed to polar residues. Residues 23–37 (STETPESAAPAAPRP) show a composition bias toward low complexity.

The protein belongs to the universal ribosomal protein uS9 family.

The polypeptide is Small ribosomal subunit protein uS9 (Leifsonia xyli subsp. xyli (strain CTCB07)).